The chain runs to 542 residues: Protein phosphatase 1G (542 aa).

G2 carries the N-myristoyl glycine lipid modification. R22 is modified (omega-N-methylarginine). In terms of domain architecture, PPM-type phosphatase spans 26–502; sequence PYGFSAMQGW…DNMTCIIICF (477 aa). 2 residues coordinate Mn(2+): D60 and G61. 2 disordered regions span residues 118 to 139 and 162 to 325; these read AGRPTEDEDDKEKVADEDDVDN and QNCQ…SDSG. T122 carries the post-translational modification Phosphothreonine. 2 stretches are compositionally biased toward acidic residues: residues 123 to 139 and 259 to 309; these read EDEDDKEKVADEDDVDN and DSED…DEEM. Residue K380 is modified to N6-acetyllysine. Residues D438 and D493 each coordinate Mn(2+). Residues 510–542 form a disordered region; that stretch reads LQPESGKRKLEEALSTEGAEENGNSDKKKAKRD. A Phosphoserine modification is found at S524.

This sequence belongs to the PP2C family. In terms of assembly, interacts with NOL3; may dephosphorylate NOL3. Mg(2+) is required as a cofactor. It depends on Mn(2+) as a cofactor.

Its subcellular location is the cytoplasm. It is found in the membrane. It carries out the reaction O-phospho-L-seryl-[protein] + H2O = L-seryl-[protein] + phosphate. The enzyme catalyses O-phospho-L-threonyl-[protein] + H2O = L-threonyl-[protein] + phosphate. The sequence is that of Protein phosphatase 1G from Rattus norvegicus (Rat).